The chain runs to 216 residues: Ras-related protein RABA1c (216 aa).

20 to 27 provides a ligand contact to GTP; sequence GDSGVGKS. The short motif at 42-50 is the Effector region element; that stretch reads SKSTIGVEF. Residues 68 to 72, 126 to 129, and 156 to 157 contribute to the GTP site; these read DTAGQ, NKSD, and SA. S-geranylgeranyl cysteine attachment occurs at residues Cys-213 and Cys-214.

It belongs to the small GTPase superfamily. Rab family.

The protein localises to the cell membrane. Intracellular vesicle trafficking and protein transport. The chain is Ras-related protein RABA1c (RABA1C) from Arabidopsis thaliana (Mouse-ear cress).